Consider the following 282-residue polypeptide: Purine nucleoside phosphorylase (282 aa).

Phosphate is bound by residues serine 46, histidine 78, and 103-105 (RTH). The active site involves glutamate 204. Residue glutamate 204 coordinates a purine D-ribonucleoside. Serine 223 is a binding site for phosphate. Asparagine 246 is a binding site for a purine D-ribonucleoside.

It belongs to the PNP/MTAP phosphorylase family. Homotrimer.

It carries out the reaction a purine 2'-deoxy-D-ribonucleoside + phosphate = a purine nucleobase + 2-deoxy-alpha-D-ribose 1-phosphate. Its pathway is purine metabolism; purine nucleoside salvage. Its function is as follows. The purine nucleoside phosphorylases catalyze the phosphorolytic breakdown of the N-glycosidic bond in the beta-(deoxy)ribonucleoside molecules, with the formation of the corresponding free purine bases and pentose-1-phosphate. Cleaves guanosine, inosine, 2'-deoxyguanosine and 2'-deoxyinosine. This is Purine nucleoside phosphorylase (punA) from Cellulomonas sp.